A 481-amino-acid polypeptide reads, in one-letter code: Probable glycine dehydrogenase (decarboxylating) subunit 2 (481 aa).

N6-(pyridoxal phosphate)lysine is present on Lys269.

The protein belongs to the GcvP family. C-terminal subunit subfamily. As to quaternary structure, the glycine cleavage system is composed of four proteins: P, T, L and H. In this organism, the P 'protein' is a heterodimer of two subunits. Requires pyridoxal 5'-phosphate as cofactor.

The enzyme catalyses N(6)-[(R)-lipoyl]-L-lysyl-[glycine-cleavage complex H protein] + glycine + H(+) = N(6)-[(R)-S(8)-aminomethyldihydrolipoyl]-L-lysyl-[glycine-cleavage complex H protein] + CO2. The glycine cleavage system catalyzes the degradation of glycine. The P protein binds the alpha-amino group of glycine through its pyridoxal phosphate cofactor; CO(2) is released and the remaining methylamine moiety is then transferred to the lipoamide cofactor of the H protein. This chain is Probable glycine dehydrogenase (decarboxylating) subunit 2, found in Chlorobium chlorochromatii (strain CaD3).